We begin with the raw amino-acid sequence, 206 residues long: uncharacterized protein (206 aa).

One can recognise a YrdC-like domain in the interval 14 to 200 (QRLINQAVEI…TPVVVREGVG (187 aa)).

Belongs to the SUA5 family.

This is an uncharacterized protein from Escherichia coli O6:H1 (strain CFT073 / ATCC 700928 / UPEC).